A 148-amino-acid polypeptide reads, in one-letter code: Iron/alpha-ketoglutarate-dependent dioxygenase ausU (148 aa).

The Fe cation site is built by histidine 45 and aspartate 47.

The protein belongs to the PhyH family. In terms of assembly, homodimer. Fe cation is required as a cofactor.

It participates in secondary metabolite biosynthesis; terpenoid biosynthesis. Iron/alpha-ketoglutarate-dependent dioxygenase; part of the gene cluster B that mediates the biosynthesis of austinol and dehydroaustinol, two fungal meroterpenoids. The first step of the pathway is the synthesis of 3,5-dimethylorsellinic acid by the polyketide synthase ausA. 3,5-dimethylorsellinic acid is then prenylated by the polyprenyl transferase ausN. Further epoxidation by the FAD-dependent monooxygenase ausM and cyclization by the probable terpene cyclase ausL lead to the formation of protoaustinoid A. Protoaustinoid A is then oxidized to spiro-lactone preaustinoid A3 by the combined action of the FAD-binding monooxygenases ausB and ausC, and the dioxygenase ausE. Acid-catalyzed keto-rearrangement and ring contraction of the tetraketide portion of preaustinoid A3 by ausJ lead to the formation of preaustinoid A4. The aldo-keto reductase ausK, with the help of ausH, is involved in the next step by transforming preaustinoid A4 into isoaustinone which is in turn hydroxylated by the P450 monooxygenase ausI to form austinolide. Finally, the cytochrome P450 monooxygenase ausG modifies austinolide to austinol. Austinol can be further modified to dehydroaustinol which forms a diffusible complex with diorcinol that initiates conidiation. Due to genetic rearrangements of the clusters and the subsequent loss of some enzymes, the end products of the Emericella nidulans austinoid biosynthesis clusters are austinol and dehydroaustinol, even if additional enzymes, such as the O-acetyltransferase ausQ and the cytochrome P450 monooxygenase ausR are still functional. The protein is Iron/alpha-ketoglutarate-dependent dioxygenase ausU of Emericella nidulans (strain FGSC A4 / ATCC 38163 / CBS 112.46 / NRRL 194 / M139) (Aspergillus nidulans).